Reading from the N-terminus, the 379-residue chain is Odorant receptor 23a (379 aa).

Residues 1–36 (MKLSETLKIDYFRVQLNAWRICGALDLSEGRYWSWS) lie on the Cytoplasmic side of the membrane. A helical membrane pass occupies residues 37-57 (MLLCILVYLPTPMLLRGVYSF). Topologically, residues 58-64 (EDPVENN) are extracellular. A glycan (N-linked (GlcNAc...) asparagine) is linked at Asn-64. A helical membrane pass occupies residues 65 to 85 (FSLSLTVTSLSNLMKFCMYVA). Topologically, residues 86-125 (QLTKMVEVQSLIGQLDARVSGESQSERHRNMTEHLLRMSK) are cytoplasmic. The chain crosses the membrane as a helical span at residues 126–146 (LFQITYAVVFIIAAVPFVFET). The Extracellular portion of the chain corresponds to 147 to 162 (ELSLPMPMWFPFDWKN). Residues 163–183 (SMVAYIGALVFQEIGYVFQIM) traverse the membrane as a helical segment. At 184–253 (QCFAADSFPP…TKSLVSYPMM (70 aa)) the chain is on the cytoplasmic side. The helical transmembrane segment at 254 to 274 (VQFMVIGINIAITLFVLIFYV) threads the bilayer. At 275 to 280 (ETLYDR) the chain is on the extracellular side. Residues 281 to 301 (IYYLCFLLGITVQTYPLCYYG) traverse the membrane as a helical segment. Topologically, residues 302-340 (TMVQESFAELHYAVFCSNWVDQSASYRGHMLILAERTKR) are cytoplasmic. The chain crosses the membrane as a helical span at residues 341 to 361 (MQLLLAGNLVPIHLSTYVACW). At 362 to 379 (KGAYSFFTLMADRDGLGS) the chain is on the extracellular side.

The protein belongs to the insect chemoreceptor superfamily. Heteromeric odorant receptor channel (TC 1.A.69) family. Or2a subfamily. In terms of assembly, interacts with Orco. Complexes exist early in the endomembrane system in olfactory sensory neurons (OSNs), coupling these complexes to the conserved ciliary trafficking pathway. In terms of tissue distribution, expressed in 10-40 sensory cells in the third antenna segment and in the maxillary palp.

The protein localises to the cell membrane. In terms of biological role, odorant receptor which mediates acceptance or avoidance behavior, depending on its substrates. The odorant receptor repertoire encodes a large collection of odor stimuli that vary widely in identity, intensity, and duration. May form a complex with Orco to form odorant-sensing units, providing sensitive and prolonged odorant signaling and calcium permeability. The protein is Odorant receptor 23a (Or23a) of Drosophila melanogaster (Fruit fly).